The following is a 119-amino-acid chain: uncharacterized protein (119 aa).

Residues 74 to 91 form a helical membrane-spanning segment; that stretch reads LSVHFLLNVISAILSMLI.

It is found in the membrane. This is an uncharacterized protein from Schizosaccharomyces pombe (strain 972 / ATCC 24843) (Fission yeast).